The sequence spans 1085 residues: MAGKKSPRKSTINHSTHSGKLPANIKRLIKKGESDTKSRQSPPTLSTTRPRRFSLIYSSESSLSDVSDSDKNKSTNPHKIKRKAKNISNNSQGKKSKLIQRQIDNDDEGTESSDYQAVTDGEESENEEEESEEEEEDDDEDDDDDDDDGSDSDSDSETSSDDENIDFVKLTAQRKKRAMKALSAMNTNSNTLYSSRENSNKNKSVKLSPKKENEEEQKEEKEKEKEEQQKQQESNKKEVNGSGTTTTQQALSFKFKKEDDGISFGNGNEGYNEDIGEEVLDLKNKENNGNEEDKLDSKVMLGNNDELRFPNISESDESEYDIDQDAYFDVINNEDSHGEIGTDLETGEDDLPILEEEEQNIVSELQNDDELSFDGSIHEEGSDPVEDAENKFLQNEYNQENGYDEEDDEEDEIMSDFDMPFYEDPKFANLYYYGDGSEPKLSLSTSLPLMLNDEKLSKLKKKEAKKREQEERKQRRKLYKKTQKPSTRTTSNVDNDEYIFNVFFQSDDENSGHKSKKGRHKSGKSHIEHKNKGSNLIKSNDDLEPSTHSTVLNSGKYDSSDDEYDNILLDVAHMPSDDECSESETSHDADTDEELRALDSDSLDIGTELDDDYEDDDDDSSVTNVFIDIDDLDPDSFYFHYDSDGSSSLISSNSDKENSDGSKDCKHDLLETVVYVDDESTDEDDNLPPPSSRSKNIGSKAKEIVSSNVVGLRPPKLGTWETDNKPFSIIDGLSTKSLYALIQEHQQLREQHQRAQTPDVKREGSSNGNNGDELTLNELLNMSELEDDSPSHTDDMENNYNDAINSKSTNGHAADWYEVPKVPLSAFRNKGINAYEEDEYMIPANSNRKVPIGYIGNERTRKKIDKMKELQRKKTEKKRQLKKKKKLLKIRKQRQKAIKEQETMNLQLGINGHEIIGNNNSHSDINTGTDFTTNENTPMNELPSHAPEDASLIPHNSDLAVDSNTRKNSTKSVGLDEIHEILGKDENDLLSVGDINGYDAQEGHVIEDTDADILASLTAPVQFDNTLSHENSNSMWRRRQSMVEAAAENLRFTKNGLFSESALADIEGIMGNDVNHSFEFNDVLQ.

6 disordered regions span residues 1–251 (MAGK…QQAL), 283–302 (KNKE…VMLG), 457–493 (SKLK…TSNV), 507–622 (DDEN…DSSV), 676–700 (VDDE…IGSK), and 747–774 (QLRE…GDEL). Composition is skewed to polar residues over residues 9-18 (KSTINHSTHS) and 39-48 (RQSPPTLSTT). Residues 54–66 (SLIYSSESSLSDV) are compositionally biased toward low complexity. Positions 76–85 (NPHKIKRKAK) are enriched in basic residues. The span at 120–165 (DGEESENEEEESEEEEEDDDEDDDDDDDDGSDSDSDSETSSDDENI) shows a compositional bias: acidic residues. Positions 184–197 (AMNTNSNTLYSSRE) are enriched in polar residues. Phosphoserine is present on Ser-208. Basic and acidic residues predominate over residues 209-239 (PKKENEEEQKEEKEKEKEEQQKQQESNKKEV). Residues 241 to 251 (GSGTTTTQQAL) show a composition bias toward polar residues. Basic and acidic residues predominate over residues 283–297 (KNKENNGNEEDKLDS). Over residues 474–483 (QRRKLYKKTQ) the composition is skewed to basic residues. The segment covering 484-493 (KPSTRTTSNV) has biased composition (polar residues). Basic residues predominate over residues 513 to 524 (HKSKKGRHKSGK). Positions 546 to 557 (STHSTVLNSGKY) are enriched in polar residues. A compositionally biased stretch (basic and acidic residues) spans 584–599 (ETSHDADTDEELRALD). 2 stretches are compositionally biased toward acidic residues: residues 607-620 (TELD…DDDS) and 676-686 (VDDESTDEDDN). Over residues 747–764 (QLREQHQRAQTPDVKREG) the composition is skewed to basic and acidic residues. Ser-1041 bears the Phosphoserine mark.

This sequence belongs to the IFH1 family.

The protein localises to the nucleus. Transcriptional coactivator that together with FHL1 regulates the expression of rRNA and ribosomal protein genes. Its activity is negatively regulated by environmental stress. In Saccharomyces cerevisiae (strain ATCC 204508 / S288c) (Baker's yeast), this protein is Protein IFH1 (IFH1).